A 1863-amino-acid polypeptide reads, in one-letter code: Breast cancer type 1 susceptibility protein (1863 aa).

Met-1 carries the N-acetylmethionine modification. Residues 24–65 (CPICLELIKEPVSTKCDHIFCKFCMLKLLNQKKGPSQCPLCK) form an RING-type zinc finger. Residue Lys-109 forms a Glycyl lysine isopeptide (Lys-Gly) (interchain with G-Cter in SUMO2) linkage. The residue at position 114 (Ser-114) is a Phosphoserine. Residues 230-270 (ETDVTNTEHHQPSNNDLNTTEKRAAERHPEKYQGSSVSNLH) are disordered. The span at 248 to 260 (TTEKRAAERHPEK) shows a compositional bias: basic and acidic residues. Lys-301 is covalently cross-linked (Glycyl lysine isopeptide (Lys-Gly) (interchain with G-Cter in SUMO2)). A disordered region spans residues 306–338 (NKSKQPGLARSQHNRWAGSKETCNDRRTPSTEK). A compositionally biased stretch (basic and acidic residues) spans 327–338 (TCNDRRTPSTEK). Lys-339 is covalently cross-linked (Glycyl lysine isopeptide (Lys-Gly) (interchain with G-Cter in SUMO2)). 4 positions are modified to phosphoserine: Ser-395, Ser-398, Ser-423, and Ser-434. Residues Lys-443, Lys-459, and Lys-519 each participate in a glycyl lysine isopeptide (Lys-Gly) (interchain with G-Cter in SUMO2) cross-link. Low complexity predominate over residues 534-544 (QGTNQTEQNGQ). A disordered region spans residues 534–570 (QGTNQTEQNGQVMNITNSGHENKTKGDSIQNEKNPNP). Ser-551 carries the phosphoserine modification. Residues Lys-583 and Lys-654 each participate in a glycyl lysine isopeptide (Lys-Gly) (interchain with G-Cter in SUMO2) cross-link. Positions 654–709 (KYNQMPVRHSRNLQLMEGKEPATGAKKSNKPNEQTSKRHDSDTFPELKLTNAPGSF) are disordered. Ser-694, Ser-708, and Ser-725 each carry phosphoserine. Glycyl lysine isopeptide (Lys-Gly) (interchain with G-Cter in SUMO2) cross-links involve residues Lys-734 and Lys-739. Residues Ser-753 and Ser-840 each carry the phosphoserine modification. Residues Lys-918 and Lys-987 each participate in a glycyl lysine isopeptide (Lys-Gly) (interchain with G-Cter in SUMO2) cross-link. Position 988 is a phosphoserine; by CHEK2 (Ser-988). The residue at position 1009 (Ser-1009) is a Phosphoserine. Lys-1079 is covalently cross-linked (Glycyl lysine isopeptide (Lys-Gly) (interchain with G-Cter in SUMO2)). Ser-1143 carries the post-translational modification Phosphoserine; by ATR; in vitro. The disordered stretch occupies residues 1181–1216 (VQKGELSRSPSPFTHTHLAQGYRRGAKKLESSEENL). 5 positions are modified to phosphoserine: Ser-1189, Ser-1191, Ser-1211, Ser-1217, and Ser-1218. Ser-1280 carries the post-translational modification Phosphoserine; by ATR; in vitro. The interval 1322–1387 (KQMRHQSESQ…VSEDCSGLSS (66 aa)) is disordered. Phosphoserine is present on residues Ser-1328, Ser-1336, and Ser-1342. Positions 1373–1387 (ESETSVSEDCSGLSS) are enriched in polar residues. Residue Ser-1387 is modified to Phosphoserine; by ATM and ATR. Phosphothreonine; by ATR; in vitro is present on Thr-1394. The tract at residues 1397–1424 (RDTMQHNLIKLQQEMAELEAVLEQHGSQ) is interaction with PALB2. At Ser-1423 the chain carries Phosphoserine; by ATM and ATR. Residues 1440–1505 (EDLRNPEQST…SSPSKCPSLD (66 aa)) form a disordered region. Positions 1445 to 1470 (PEQSTSEKAVLTSQKSSEYPISQNPE) are enriched in polar residues. Residue Ser-1457 is modified to Phosphoserine; by ATR; in vitro. At Ser-1524 the chain carries Phosphoserine; by ATM. Phosphoserine is present on Ser-1542. Residues 1565–1596 (ESGISLFSDDPESDPSEDRAPESARVGNIPSS) are disordered. 2 BRCT domains span residues 1642-1736 (STER…DFEV) and 1756-1855 (QDRK…TYLI).

Heterodimer with BARD1. Part of the BRCA1-associated genome surveillance complex (BASC), which contains BRCA1, MSH2, MSH6, MLH1, ATM, BLM, PMS2 and the MRE11-RAD50-NBN protein (MRN) complex. This association could be a dynamic process changing throughout the cell cycle and within subnuclear domains. Component of the BRCA1-A complex, at least composed of BRCA1, BARD1, UIMC1/RAP80, ABRAXAS1, BRCC3/BRCC36, BABAM2 and BABAM1/NBA1. Interacts (via the BRCT domains) with ABRAXAS1 (phosphorylated form); this is important for recruitment to sites of DNA damage. Can form a heterotetramer with two molecules of ABRAXAS1 (phosphorylated form). Component of the BRCA1-RBBP8 complex. Interacts (via the BRCT domains) with RBBP8 ('Ser-327' phosphorylated form); the interaction ubiquitinates RBBP8, regulates CHEK1 activation, and involves RBBP8 in BRCA1-dependent G2/M checkpoint control on DNA damage. Associates with RNA polymerase II holoenzyme. Interacts with SMC1A, NELFB, DCLRE1C, CLSPN. Interacts with CHEK1, CHEK2, BAP1, BRCC3, UBXN1 and PCLAF. Interacts (via BRCT domains) with BRIP1 (phosphorylated form). Interacts with FANCD2 (ubiquitinated form). Interacts with H2AX (phosphorylated on 'Ser-140'). Interacts (via the BRCT domains) with ACACA (phosphorylated form); the interaction prevents dephosphorylation of ACACA. Part of a BRCA complex containing BRCA1, BRCA2 and PALB2. Interacts directly with PALB2; the interaction is essential for its function in HRR. Interacts directly with BRCA2; the interaction occurs only in the presence of PALB2 which serves as the bridging protein. Interacts (via the BRCT domains) with LMO4; the interaction represses the transcriptional activity of BRCA1. Interacts (via the BRCT domains) with CCAR2 (via N-terminus); the interaction represses the transcriptional activator activity of BRCA1. Interacts with EXD2. Interacts (via C-terminus) with DHX9; this interaction is direct and links BRCA1 to the RNA polymerase II holoenzyme. Interacts with DNA helicase ZGRF1; the interaction is increased following DNA damage induction. In terms of processing, phosphorylated in response to IR, UV, and various stimuli that cause checkpoint activation, probably by ATM or ATR. Phosphorylation at Ser-988 by CHEK2 regulates mitotic spindle assembly. Phosphorylation by AURKA regulates centrosomal microtubule nucleation. Autoubiquitinated, undergoes 'Lys-6'-linked polyubiquitination. 'Lys-6'-linked polyubiquitination does not promote degradation. Isoform 1 and isoform 3 are widely expressed. Isoform 3 is reduced or absent in several breast and ovarian cancer cell lines.

The protein localises to the nucleus. It is found in the chromosome. Its subcellular location is the cytoplasm. The enzyme catalyses S-ubiquitinyl-[E2 ubiquitin-conjugating enzyme]-L-cysteine + [acceptor protein]-L-lysine = [E2 ubiquitin-conjugating enzyme]-L-cysteine + N(6)-ubiquitinyl-[acceptor protein]-L-lysine.. It participates in protein modification; protein ubiquitination. With respect to regulation, the E3 ubiquitin-protein ligase activity is inhibited by phosphorylation by AURKA. Activity is increased by phosphatase treatment. E3 ubiquitin-protein ligase that specifically mediates the formation of 'Lys-6'-linked polyubiquitin chains and plays a central role in DNA repair by facilitating cellular responses to DNA damage. It is unclear whether it also mediates the formation of other types of polyubiquitin chains. The BRCA1-BARD1 heterodimer coordinates a diverse range of cellular pathways such as DNA damage repair, ubiquitination and transcriptional regulation to maintain genomic stability. Regulates centrosomal microtubule nucleation. Required for appropriate cell cycle arrests after ionizing irradiation in both the S-phase and the G2 phase of the cell cycle. Required for FANCD2 targeting to sites of DNA damage. Inhibits lipid synthesis by binding to inactive phosphorylated ACACA and preventing its dephosphorylation. Contributes to homologous recombination repair (HRR) via its direct interaction with PALB2, fine-tunes recombinational repair partly through its modulatory role in the PALB2-dependent loading of BRCA2-RAD51 repair machinery at DNA breaks. Component of the BRCA1-RBBP8 complex which regulates CHEK1 activation and controls cell cycle G2/M checkpoints on DNA damage via BRCA1-mediated ubiquitination of RBBP8. Acts as a transcriptional activator. The protein is Breast cancer type 1 susceptibility protein (BRCA1) of Homo sapiens (Human).